We begin with the raw amino-acid sequence, 507 residues long: ATP synthase subunit alpha, chloroplastic (507 aa).

170-177 contacts ATP; sequence GDRQTGKT.

This sequence belongs to the ATPase alpha/beta chains family. As to quaternary structure, F-type ATPases have 2 components, CF(1) - the catalytic core - and CF(0) - the membrane proton channel. CF(1) has five subunits: alpha(3), beta(3), gamma(1), delta(1), epsilon(1). CF(0) has four main subunits: a, b, b' and c.

It localises to the plastid. The protein localises to the chloroplast thylakoid membrane. The catalysed reaction is ATP + H2O + 4 H(+)(in) = ADP + phosphate + 5 H(+)(out). Functionally, produces ATP from ADP in the presence of a proton gradient across the membrane. The alpha chain is a regulatory subunit. This Tetradesmus obliquus (Green alga) protein is ATP synthase subunit alpha, chloroplastic.